Consider the following 531-residue polypeptide: MNRLLSSGMSAATLQTRMASQLLINDSKYGFLKELGLTENNAGVFHGKWAASGQVVQSFAPANNSPIANVQNGNVQDYEIAISEAKKAYNDWCEVPAPRRGEIVRQIGDKLRTQLQNLGKLVSLEMGKISAEGVGEVQEYVDICDYATGLSRSLEGKIFPSERPGHALLEQWNPLGVVGVISAFNFPCAVYGWNNALALVTGNSVVWKPAPSTPLTAIAVTKLVEEVLVANNVNPALCSLVCGEGDVGQALVKDKRVNLVSFTGSSEIGKIVGQQVQARFGKLLLELGGNNAIIVNEDADLNMVVPATVFAAVGTAGQRCTTTRRLIVHDKVYDQVLERLKKAYAQFESRIGCPLDSNTIIGPLHNQQAVGKYKASVAEAVASGGKIEYGGKVLERDGNFVLPTIVTGLKHDSPVVLRETFAPILYVLKFSTLEEAIAINNEVDQGLSSSLFTTNIQNVFKWMGPKGSDCGIVNVNIPTSGAEIGGAFGGEKETGGGRESGSDSWRQYMRRSTCTINYSKELPLAQGIKFE.

264 to 269 (GSSEIG) lines the NAD(+) pocket. The Proton acceptor role is filled by Glu286. Residue Cys320 is the Nucleophile of the active site.

It belongs to the aldehyde dehydrogenase family. Homotetramer.

The catalysed reaction is an aldehyde + NAD(+) + H2O = a carboxylate + NADH + 2 H(+). This Caenorhabditis elegans protein is Putative aldehyde dehydrogenase family 7 member A1 homolog (alh-9).